The following is a 209-amino-acid chain: dITP/XTP pyrophosphatase (209 aa).

7–12 contributes to the substrate binding site; the sequence is TGNKGK. The active-site Proton acceptor is D73. A Mg(2+)-binding site is contributed by D73. Residues S74, 155–158, K178, and 183–184 contribute to the substrate site; these read FGYD and HR.

The protein belongs to the HAM1 NTPase family. In terms of assembly, homodimer. Mg(2+) is required as a cofactor.

The catalysed reaction is XTP + H2O = XMP + diphosphate + H(+). The enzyme catalyses dITP + H2O = dIMP + diphosphate + H(+). It catalyses the reaction ITP + H2O = IMP + diphosphate + H(+). In terms of biological role, pyrophosphatase that catalyzes the hydrolysis of nucleoside triphosphates to their monophosphate derivatives, with a high preference for the non-canonical purine nucleotides XTP (xanthosine triphosphate), dITP (deoxyinosine triphosphate) and ITP. Seems to function as a house-cleaning enzyme that removes non-canonical purine nucleotides from the nucleotide pool, thus preventing their incorporation into DNA/RNA and avoiding chromosomal lesions. This chain is dITP/XTP pyrophosphatase, found in Sulfurovum sp. (strain NBC37-1).